The primary structure comprises 255 residues: tRNA (guanine-N(1)-)-methyltransferase (255 aa).

S-adenosyl-L-methionine is bound by residues glycine 113 and 133 to 138 (IGDYVL).

The protein belongs to the RNA methyltransferase TrmD family. Homodimer.

The protein resides in the cytoplasm. It catalyses the reaction guanosine(37) in tRNA + S-adenosyl-L-methionine = N(1)-methylguanosine(37) in tRNA + S-adenosyl-L-homocysteine + H(+). Specifically methylates guanosine-37 in various tRNAs. In Escherichia coli O6:K15:H31 (strain 536 / UPEC), this protein is tRNA (guanine-N(1)-)-methyltransferase.